A 492-amino-acid polypeptide reads, in one-letter code: Spindle assembly abnormal protein 6 (492 aa).

The PISA domain maps to 46-98 (SGEKELKFEISRSDDFEFLFSETLNNEKYQILARDHDLTVDFDAFPKVIIQHL). The stretch at 192–407 (KSADELASLR…KIAHYRAQRF (216 aa)) forms a coiled coil.

Nine homodimers form a cartwheel structure with an internal diameter of 23 nM and radial spokes connecting to the microtubule triplets. Interacts with sas-5.

It localises to the cytoplasm. Its subcellular location is the cytoskeleton. The protein resides in the microtubule organizing center. The protein localises to the centrosome. It is found in the centriole. Central scaffolding component of the centrioles ensuring their 9-fold symmetry. Required for centrosome biogenesis and duplication. This is Spindle assembly abnormal protein 6 from Caenorhabditis elegans.